Reading from the N-terminus, the 174-residue chain is ATP-dependent protease subunit HslV (174 aa).

Residue Thr-2 is part of the active site. 3 residues coordinate Na(+): Gly-157, Cys-160, and Thr-163.

Belongs to the peptidase T1B family. HslV subfamily. A double ring-shaped homohexamer of HslV is capped on each side by a ring-shaped HslU homohexamer. The assembly of the HslU/HslV complex is dependent on binding of ATP.

The protein resides in the cytoplasm. The catalysed reaction is ATP-dependent cleavage of peptide bonds with broad specificity.. With respect to regulation, allosterically activated by HslU binding. Protease subunit of a proteasome-like degradation complex believed to be a general protein degrading machinery. The polypeptide is ATP-dependent protease subunit HslV (Yersinia pseudotuberculosis serotype I (strain IP32953)).